The primary structure comprises 187 residues: Ribosome-recycling factor (187 aa).

The protein belongs to the RRF family.

It localises to the cytoplasm. Functionally, responsible for the release of ribosomes from messenger RNA at the termination of protein biosynthesis. May increase the efficiency of translation by recycling ribosomes from one round of translation to another. The chain is Ribosome-recycling factor from Rhodopseudomonas palustris (strain BisA53).